Here is a 532-residue protein sequence, read N- to C-terminus: Putative L-lactate permease (532 aa).

The next 14 membrane-spanning stretches (helical) occupy residues 23–43, 56–76, 101–121, 129–149, 152–172, 180–200, 213–233, 234–254, 274–294, 346–366, 387–407, 420–440, 462–482, and 508–528; these read ALPS…VHLL, VVSA…AILF, VAQL…ASGF, APIL…ALIM, VPVS…ALKL, IGSI…LLAL, IVFI…IAQV, NYEF…VWAA, AGEV…LIVT, LLYV…IPFF, PFIA…GGEH, ISGS…SFFS, GISV…GNMV, and IIPM…LVPL.

It belongs to the lactate permease family.

The protein resides in the cell inner membrane. Its function is as follows. May play a role in L-lactate transport. The polypeptide is Putative L-lactate permease (Haemophilus influenzae (strain ATCC 51907 / DSM 11121 / KW20 / Rd)).